The sequence spans 382 residues: 1-deoxy-D-xylulose 5-phosphate reductoisomerase (382 aa).

Residues Thr10, Gly11, Ser12, Ile13, Asn38, and Asn120 each coordinate NADPH. Lys121 provides a ligand contact to 1-deoxy-D-xylulose 5-phosphate. Glu122 lines the NADPH pocket. Position 146 (Asp146) interacts with Mn(2+). 1-deoxy-D-xylulose 5-phosphate-binding residues include Ser147, Glu148, Ser172, and His195. Residue Glu148 coordinates Mn(2+). Gly201 provides a ligand contact to NADPH. 4 residues coordinate 1-deoxy-D-xylulose 5-phosphate: Ser208, Asn213, Lys214, and Glu217. A Mn(2+)-binding site is contributed by Glu217.

This sequence belongs to the DXR family. The cofactor is Mg(2+). Requires Mn(2+) as cofactor.

It carries out the reaction 2-C-methyl-D-erythritol 4-phosphate + NADP(+) = 1-deoxy-D-xylulose 5-phosphate + NADPH + H(+). Its pathway is isoprenoid biosynthesis; isopentenyl diphosphate biosynthesis via DXP pathway; isopentenyl diphosphate from 1-deoxy-D-xylulose 5-phosphate: step 1/6. Catalyzes the NADPH-dependent rearrangement and reduction of 1-deoxy-D-xylulose-5-phosphate (DXP) to 2-C-methyl-D-erythritol 4-phosphate (MEP). In Thermoanaerobacter pseudethanolicus (strain ATCC 33223 / 39E) (Clostridium thermohydrosulfuricum), this protein is 1-deoxy-D-xylulose 5-phosphate reductoisomerase.